The sequence spans 837 residues: Vacuolar membrane protease (837 aa).

At 1–36 the chain is on the cytoplasmic side; sequence MSEEEVHDTSSEASEVFTNQPNAFVRGVRSIFGYRK. Residues 37 to 57 form a helical membrane-spanning segment; it reads TSLTLFVILTIVVTAGLSFYD. Residues 58 to 355 lie on the Vacuolar side of the membrane; the sequence is NSLELTIELP…FATPISALAR (298 aa). Asparagine 143 carries N-linked (GlcNAc...) asparagine glycosylation. Histidine 157 and aspartate 169 together coordinate Zn(2+). Glutamate 201 serves as the catalytic Proton acceptor. Residues glutamate 202, glutamate 227, and histidine 299 each coordinate Zn(2+). A helical membrane pass occupies residues 356–376; sequence VNLVLLVLFPVVSTPLLFVIV. The Cytoplasmic portion of the chain corresponds to 377-384; that stretch reads KYKKWKLR. Residues 385–405 form a helical membrane-spanning segment; that stretch reads VTNFLGVPLAMGLAVAVGQVG. Residues 406 to 415 lie on the Vacuolar side of the membrane; it reads NPMLVSSHPM. A helical transmembrane segment spans residues 416-436; the sequence is MVVATTTSIVVLVYYVVLNGV. At 437-446 the chain is on the cytoplasmic side; the sequence is DWVNTSSDQK. The chain crosses the membrane as a helical span at residues 447–467; that stretch reads LVTMIEVSFVYWVVLVYVTWS. Over 468–474 the chain is Vacuolar; that stretch reads GGDHTGE. A helical transmembrane segment spans residues 475–495; it reads FGVTVLFFVQASTSLLGLIGW. Topologically, residues 496–539 are cytoplasmic; it reads TFTRVRGGDEPLLSGEEERYGTEDERDTEKPLVEHNYDWSLQYL. Residues 540-560 form a helical membrane-spanning segment; sequence LIVPVSSLVVYNSGWLVLEGV. The N-linked (GlcNAc...) asparagine glycan is linked to asparagine 561. At 561-572 the chain is on the vacuolar side; that stretch reads NKTVQESLASEH. A helical membrane pass occupies residues 573-593; it reads LIYWIVVVFSQFLVLPVVPFI. The Cytoplasmic segment spans residues 594–598; it reads TKFNR. Residues 599–619 form a helical membrane-spanning segment; the sequence is YIVLGLSVVVVVGVLMSMAVH. The Vacuolar portion of the chain corresponds to 620–837; the sequence is PFNQGSPMKL…LVGVVKHVDV (218 aa). Asparagine 689 carries N-linked (GlcNAc...) asparagine glycosylation.

This sequence belongs to the peptidase M28 family. The cofactor is Zn(2+).

Its subcellular location is the vacuole membrane. In terms of biological role, may be involved in vacuolar sorting and osmoregulation. The chain is Vacuolar membrane protease from Candida albicans (strain SC5314 / ATCC MYA-2876) (Yeast).